We begin with the raw amino-acid sequence, 99 residues long: Protein dpy-30 homolog (99 aa).

N-acetylmethionine is present on methionine 1. Positions 1-26 are disordered; sequence MEPEQMLEGQTQVAENPHSEYGLTDN. Serine 19 carries the post-translational modification Phosphoserine. N6-acetyllysine; alternate is present on lysine 35. Lysine 35 is covalently cross-linked (Glycyl lysine isopeptide (Lys-Gly) (interchain with G-Cter in SUMO2); alternate).

Belongs to the dpy-30 family. Homodimer. Core component of several methyltransferase-containing complexes including MLL1/MLL, MLL2/3 (also named ASCOM complex) and MLL4/WBP7. Each complex is at least composed of ASH2L, RBBP5, WDR5, DPY30, one or more specific histone methyltransferases (KMT2A/MLL1, KMT2D/MLL2, KMT2C/MLL3 and KMT2B/MLL4), and the facultative components MEN1, HCFC1, HCFC2, NCOA6, KDM6A, PAXIP1/PTIP, PAGR1 and alpha- and beta-tubulin. Interacts with ASH2L; the interaction is direct. Interacts with ARFGEF1. Component of the SET1 complex, at least composed of the catalytic subunit (SETD1A or SETD1B), WDR5, WDR82, RBBP5, ASH2L/ASH2, CXXC1/CFP1, HCFC1 and DPY30.

It localises to the nucleus. It is found in the golgi apparatus. The protein resides in the trans-Golgi network. As part of the MLL1/MLL complex, involved in the methylation of histone H3 at 'Lys-4', particularly trimethylation. Histone H3 'Lys-4' methylation represents a specific tag for epigenetic transcriptional activation. May play some role in histone H3 acetylation. In embryonic stem cells, may play a crucial role in retinoic acid-induced differentiation along the neural lineage, regulating gene induction and H3 'Lys-4' methylation at key developmental loci. May also play an indirect or direct role in endosomal transport. The sequence is that of Protein dpy-30 homolog (DPY30) from Bos taurus (Bovine).